Reading from the N-terminus, the 131-residue chain is Fluoride-specific ion channel FluC 1 (131 aa).

3 consecutive transmembrane segments (helical) span residues 38–58 (FPLSTLVINGVASLCAGIAMM), 69–89 (TVMMFVVGFLGGFSTFSTALN), and 108–128 (IATVAVPLICVAAGFGIALLA). Residues Gly79 and Ser82 each coordinate Na(+).

This sequence belongs to the fluoride channel Fluc/FEX (TC 1.A.43) family.

Its subcellular location is the cell membrane. The enzyme catalyses fluoride(in) = fluoride(out). With respect to regulation, na(+) is not transported, but it plays an essential structural role and its presence is essential for fluoride channel function. In terms of biological role, fluoride-specific ion channel. Important for reducing fluoride concentration in the cell, thus reducing its toxicity. This Bifidobacterium longum (strain NCC 2705) protein is Fluoride-specific ion channel FluC 1.